We begin with the raw amino-acid sequence, 1373 residues long: Disease resistance protein RRS1 (1373 aa).

The TIR domain maps to Glu5–His146. An NB-ARC domain is found at Ile170 to His421. Residue Gly179–Thr186 participates in ATP binding. 9 LRR repeats span residues Ser498–Asn522, Asn535–Pro553, Asn554–Pro575, His577–Leu598, Ala621–Arg646, Pro665–Pro688, Leu742–Gly766, Pro768–Ile793, and Pro831–Leu854. The short motif at Arg988 to Asp1005 is the Nuclear localization signal element. Residues Ile1204–Pro1272 constitute a DNA-binding region (WRKY). The segment at Arg1300–Ala1323 is disordered.

Interacts with PopP2, a R.solanacearum type III effector.

It localises to the nucleus. Transcription factor. Interacts specifically with the W box (5'-(T)TGAC[CT]-3'), a frequently occurring elicitor-responsive cis-acting element. Also acts as a disease resistance protein involved in resistance to fungal and bacterial pathogens, including R.solanacearum, P.syringae pv. tomato and C.higginsianum. In presence of RPS4, elicites an EDS1-dependent hypersensitive response. This chain is Disease resistance protein RRS1, found in Arabidopsis thaliana (Mouse-ear cress).